A 334-amino-acid polypeptide reads, in one-letter code: Serine racemase (334 aa).

Residue glutamate 13 coordinates Mg(2+). Residues serine 31, serine 32, isoleucine 33, lysine 51, and threonine 52 each contribute to the ATP site. Residues lysine 56 and serine 84 each act as proton acceptor in the active site. N6-(pyridoxal phosphate)lysine is present on lysine 56. Position 86 (asparagine 86) interacts with pyridoxal 5'-phosphate. Position 89 (glutamine 89) interacts with ATP. Cysteine 113 carries the post-translational modification S-nitrosocysteine. Tyrosine 121 is a binding site for ATP. Asparagine 154 contacts pyridoxal 5'-phosphate. A Mg(2+)-binding site is contributed by aspartate 178. Pyridoxal 5'-phosphate is bound by residues glycine 185, glycine 186, glycine 187, glycine 188, and methionine 189. Mg(2+)-binding residues include glutamate 210, alanine 214, aspartate 216, and asparagine 247. Residues glutamate 210, alanine 214, aspartate 216, and asparagine 247 each coordinate Ca(2+). Glutamate 210, alanine 214, and aspartate 216 together coordinate Mn(2+). Lysine 279 provides a ligand contact to ATP. Serine 313 is a binding site for pyridoxal 5'-phosphate. Asparagine 316 is an ATP binding site.

This sequence belongs to the serine/threonine dehydratase family. As to quaternary structure, homodimer. It depends on Mg(2+) as a cofactor. The cofactor is Mn(2+). Requires Ca(2+) as cofactor. Pyridoxal 5'-phosphate is required as a cofactor. S-nitrosylated, leading to decrease the enzyme activity.

The catalysed reaction is L-serine = D-serine. It catalyses the reaction L-serine = pyruvate + NH4(+). The enzyme catalyses D-serine = pyruvate + NH4(+). In terms of biological role, catalyzes the synthesis of D-serine from L-serine. D-serine is a key coagonist with glutamate at NMDA receptors. Has dehydratase activity towards both L-serine and D-serine. The polypeptide is Serine racemase (SRR) (Bos taurus (Bovine)).